We begin with the raw amino-acid sequence, 350 residues long: Biotin synthase (350 aa).

The region spanning 41–265 is the Radical SAM core domain; sequence NEVQISRLLS…VMPLSRVRLS (225 aa). 3 residues coordinate [4Fe-4S] cluster: Cys-56, Cys-60, and Cys-63. Positions 100, 131, 191, and 263 each coordinate [2Fe-2S] cluster.

It belongs to the radical SAM superfamily. Biotin synthase family. In terms of assembly, homodimer. [4Fe-4S] cluster is required as a cofactor. The cofactor is [2Fe-2S] cluster.

It catalyses the reaction (4R,5S)-dethiobiotin + (sulfur carrier)-SH + 2 reduced [2Fe-2S]-[ferredoxin] + 2 S-adenosyl-L-methionine = (sulfur carrier)-H + biotin + 2 5'-deoxyadenosine + 2 L-methionine + 2 oxidized [2Fe-2S]-[ferredoxin]. It functions in the pathway cofactor biosynthesis; biotin biosynthesis; biotin from 7,8-diaminononanoate: step 2/2. Functionally, catalyzes the conversion of dethiobiotin (DTB) to biotin by the insertion of a sulfur atom into dethiobiotin via a radical-based mechanism. This is Biotin synthase from Shewanella loihica (strain ATCC BAA-1088 / PV-4).